A 198-amino-acid chain; its full sequence is Nucleoid occlusion factor SlmA (198 aa).

Residues 10–70 form the HTH tetR-type domain; it reads NRREEILQSL…SLIEFIEDSL (61 aa). Residues 33–52 constitute a DNA-binding region (H-T-H motif); it reads TTAKLAASVGVSEAALYRHF. Residues 117 to 144 are a coiled coil; sequence EQDRLQGRINQLFERIEAQLRQVLREKR.

Belongs to the nucleoid occlusion factor SlmA family. Homodimer. Interacts with FtsZ.

Its subcellular location is the cytoplasm. It is found in the nucleoid. In terms of biological role, required for nucleoid occlusion (NO) phenomenon, which prevents Z-ring formation and cell division over the nucleoid. Acts as a DNA-associated cell division inhibitor that binds simultaneously chromosomal DNA and FtsZ, and disrupts the assembly of FtsZ polymers. SlmA-DNA-binding sequences (SBS) are dispersed on non-Ter regions of the chromosome, preventing FtsZ polymerization at these regions. This is Nucleoid occlusion factor SlmA from Salmonella agona (strain SL483).